The chain runs to 291 residues: Small ribosomal subunit biogenesis GTPase RsgA (291 aa).

The region spanning K63–L221 is the CP-type G domain. Residues T112 to D115 and G164 to T172 contribute to the GTP site. C245, C250, H252, and C258 together coordinate Zn(2+).

Belongs to the TRAFAC class YlqF/YawG GTPase family. RsgA subfamily. Monomer. Associates with 30S ribosomal subunit, binds 16S rRNA. It depends on Zn(2+) as a cofactor.

The protein resides in the cytoplasm. Functionally, one of several proteins that assist in the late maturation steps of the functional core of the 30S ribosomal subunit. Helps release RbfA from mature subunits. May play a role in the assembly of ribosomal proteins into the subunit. Circularly permuted GTPase that catalyzes slow GTP hydrolysis, GTPase activity is stimulated by the 30S ribosomal subunit. The protein is Small ribosomal subunit biogenesis GTPase RsgA of Staphylococcus saprophyticus subsp. saprophyticus (strain ATCC 15305 / DSM 20229 / NCIMB 8711 / NCTC 7292 / S-41).